A 327-amino-acid chain; its full sequence is MAKPAKRVAVTGAAGQIAYSLLFRIANGDLLGKDQPVILQLLDLPQAQGAVKGVVMELDDCAFPLLSGVVITDDPEVAFKDADVALLVGARPRSKGMERKDLLSANAEIFTVQGKALNKVASRDVKVLVVGNPANTNAYIAMKSAPDLPKKNFTAMLRLDHNRALSQLAAKSGKPVASIEKLAVWGNHSPTMYPDFRFATAEGQDLTKLINDDEWNRNTFIPTVGKRGAAIIEARGLSSAASAANAAIDHVRDWVLGTNGKWVTMGIPSDGSYGIPEDIIYGVPVTCENGEYKRVEGLEIDAFSREKMDGTLNELLEEREGVQHLLG.

An NAD(+)-binding site is contributed by 12-18 (GAAGQIA). Positions 93 and 99 each coordinate substrate. NAD(+)-binding positions include Asn106, Gln113, and 130–132 (VGN). Substrate contacts are provided by Asn132 and Arg163. The active-site Proton acceptor is His188.

The protein belongs to the LDH/MDH superfamily. MDH type 2 family.

The catalysed reaction is (S)-malate + NAD(+) = oxaloacetate + NADH + H(+). Catalyzes the reversible oxidation of malate to oxaloacetate. This chain is Malate dehydrogenase, found in Paraburkholderia phytofirmans (strain DSM 17436 / LMG 22146 / PsJN) (Burkholderia phytofirmans).